The sequence spans 43 residues: MFSQIGAFLDSALLLLVAFFAVYRLVLVLCRWQRRQLDIPIHI.

Residues 2-22 (FSQIGAFLDSALLLLVAFFAV) traverse the membrane as a helical segment.

Belongs to the arteriviridae ORF5a protein family. Interacts with proteins GP2B and GP4.

It is found in the virion. Its subcellular location is the host cell membrane. Functionally, minor virion component that plays an essential role in virus infectivity. In Sus scrofa (Pig), this protein is Structural protein ORF5a.